The sequence spans 475 residues: MKRWPVFPRSLRQLVMLAFLLILLPLLVLAWQAWQSLNALSDQAALVNRTTLIDARRSEAMTNAALEMERSYRQYCVLDDPTLAKVYQSQRKRYSEMLDAHAGVLPDDKLYQALRQDLHNLAQLQCNNSGPDAAAAARLEAFASANTEMVQATRTVVFSRGQQLQREIAERGQYFGWQSLVLFLVSLVMVLLFTRMIIGPVKNIERMINRLGEGRSLGNSVSFSGPSELRSVGQRILWLSERLSWLESQRHQFLRHLSHELKTPLASMREGTELLADQVVGPLTPEQKEVVSILDSSSRNLQKLIEQLLDYNRKQADSAVELENVELAPLVETVVSAHSLPARAKMMHTDVDLKATACLAEPMLLMSVLDNLYSNAVHYGAESGNICLRSSLHGARVYIDVINTGTPIPQEERAMIFEPFFQGSHQRKGAVKGSGLGLSIARDCIRRMQGELYLVDESGQDVCFRIELPSSKNTK.

Over 1 to 13 (MKRWPVFPRSLRQ) the chain is Cytoplasmic. Residues 14–34 (LVMLAFLLILLPLLVLAWQAW) form a helical membrane-spanning segment. Residues 35-173 (QSLNALSDQA…LQREIAERGQ (139 aa)) lie on the Periplasmic side of the membrane. The helical transmembrane segment at 174-194 (YFGWQSLVLFLVSLVMVLLFT) threads the bilayer. At 195–475 (RMIIGPVKNI…IELPSSKNTK (281 aa)) the chain is on the cytoplasmic side. Residues 256–472 (HLSHELKTPL…CFRIELPSSK (217 aa)) enclose the Histidine kinase domain. His259 carries the post-translational modification Phosphohistidine; by autocatalysis.

Autophosphorylated.

The protein resides in the cell inner membrane. The catalysed reaction is ATP + protein L-histidine = ADP + protein N-phospho-L-histidine.. Functionally, member of the two-component regulatory system GlrR/GlrK that up-regulates transcription of the glmY sRNA when cells enter the stationary growth phase. Activates GlrR by phosphorylation. This chain is Sensor histidine kinase GlrK (glrK), found in Escherichia coli (strain K12).